The following is a 244-amino-acid chain: 2,5-diamino-6-ribosylamino-4(3H)-pyrimidinone 5'-phosphate reductase (244 aa).

Residues Thr79, Asp83, Val159, and 182 to 186 (GANVI) contribute to the NADP(+) site.

The protein belongs to the HTP reductase family. Homodimer.

It catalyses the reaction 2,5-diamino-6-(1-D-ribitylamino)pyrimidin-4(3H)-one 5'-phosphate + NADP(+) = 2,5-diamino-6-(1-D-ribosylamino)pyrimidin-4(3H)-one 5'-phosphate + NADPH + H(+). The catalysed reaction is 2,5-diamino-6-(1-D-ribitylamino)pyrimidin-4(3H)-one 5'-phosphate + NAD(+) = 2,5-diamino-6-(1-D-ribosylamino)pyrimidin-4(3H)-one 5'-phosphate + NADH + H(+). It functions in the pathway cofactor biosynthesis; riboflavin biosynthesis. Catalyzes an early step in riboflavin biosynthesis, the NADPH-dependent reduction of the ribose side chain of 2,5-diamino-6-ribosylamino-4(3H)-pyrimidinone 5'-phosphate, yielding 2,5-diamino-6-ribitylamino-4(3H)-pyrimidinone 5'-phosphate. The protein is 2,5-diamino-6-ribosylamino-4(3H)-pyrimidinone 5'-phosphate reductase (RIB7) of Saccharomyces cerevisiae (strain ATCC 204508 / S288c) (Baker's yeast).